A 626-amino-acid polypeptide reads, in one-letter code: MPIRHLSETIINQIAAGEVIERPASVIKELVENAIDAGATRIEVVTGGGGKTLLRVTDNGSGIPVDELPLAVSRHCTSKLSDDVHDIRALGFRGEALPSIGSVAKLTLKSRPQDADSGFEVSVSGGHLDGPRPSALNRGTIAEVRDLFFATPARLKFMKTDRAEASAITDVVKRIAIAFPHVRFSLAGTDRTPLELAATGSGAEATLERINQVLGKEFGENALAIDAERDGVRLAGFVGIPSHNRGNALHQFAYVNGRPVRDKQLFGALRGAYADVMARDRHPVAVLFLTLDPAFVDVNVHPAKADVRFRDPGLVRGLIVGAIKQALAQSGIRPATSGADAMLQAFRAEGFQPPSPSFTSRPSSAGYASGSWHPAVSSPRTEWSPQTAHPAHRPLDLGAAPSFQESDQATLATVNVLAADARATRDEAPVELQQKPLGAARAQIHANYIVSQTEDSLVIVDQHAAHERLVYEALKNALHSRPISGQMLLIPEIVDLPEEDAERLATHAETLARFGLGIEQFGPGAIAVRETPAMLGEMNVQQLIRDLSDEIAEHDTSEGLKAMLNHVAATMACHGSVRSGRRLKPEEMNALLREMEATPGSGTCNHGRPTYIELKLTDIERLFGRR.

Residues 352 to 399 are disordered; sequence QPPSPSFTSRPSSAGYASGSWHPAVSSPRTEWSPQTAHPAHRPLDLGA. The segment covering 378–387 has biased composition (polar residues); sequence SPRTEWSPQT.

This sequence belongs to the DNA mismatch repair MutL/HexB family.

Functionally, this protein is involved in the repair of mismatches in DNA. It is required for dam-dependent methyl-directed DNA mismatch repair. May act as a 'molecular matchmaker', a protein that promotes the formation of a stable complex between two or more DNA-binding proteins in an ATP-dependent manner without itself being part of a final effector complex. This chain is DNA mismatch repair protein MutL, found in Brucella anthropi (strain ATCC 49188 / DSM 6882 / CCUG 24695 / JCM 21032 / LMG 3331 / NBRC 15819 / NCTC 12168 / Alc 37) (Ochrobactrum anthropi).